The sequence spans 538 residues: AAA ATPase forming ring-shaped complexes (538 aa).

Residues 14 to 54 (ARELRLANHRLGAQNEKLTEALKASREKLAEINSRLADMAE) adopt a coiled-coil conformation. 240–245 (GNGKTL) contacts ATP.

The protein belongs to the AAA ATPase family. As to quaternary structure, homohexamer. Assembles into a hexameric ring structure.

This chain is AAA ATPase forming ring-shaped complexes, found in Corynebacterium urealyticum (strain ATCC 43042 / DSM 7109).